A 245-amino-acid polypeptide reads, in one-letter code: Probable septum site-determining protein MinC (245 aa).

Positions 113–132 (RERPLEPLVGEEKKKPEKPP) are enriched in basic and acidic residues. The disordered stretch occupies residues 113 to 138 (RERPLEPLVGEEKKKPEKPPEPTIKP).

This sequence belongs to the MinC family. In terms of assembly, interacts with MinD and FtsZ.

Functionally, cell division inhibitor that blocks the formation of polar Z ring septums. Rapidly oscillates between the poles of the cell to destabilize FtsZ filaments that have formed before they mature into polar Z rings. Prevents FtsZ polymerization. The protein is Probable septum site-determining protein MinC of Pseudomonas fluorescens (strain SBW25).